Here is a 130-residue protein sequence, read N- to C-terminus: Lysozyme C, kidney isozyme (130 aa).

Residues 1–130 (KVFERCELAR…LTSYIQGCGV (130 aa)) form the C-type lysozyme domain. 4 cysteine pairs are disulfide-bonded: cysteine 6-cysteine 128, cysteine 30-cysteine 116, cysteine 65-cysteine 81, and cysteine 77-cysteine 95. Active-site residues include glutamate 35 and aspartate 53.

Belongs to the glycosyl hydrolase 22 family. In terms of assembly, monomer.

Its subcellular location is the secreted. The enzyme catalyses Hydrolysis of (1-&gt;4)-beta-linkages between N-acetylmuramic acid and N-acetyl-D-glucosamine residues in a peptidoglycan and between N-acetyl-D-glucosamine residues in chitodextrins.. Its function is as follows. Lysozymes have primarily a bacteriolytic function; those in tissues and body fluids are associated with the monocyte-macrophage system and enhance the activity of immunoagents. This Ovis aries (Sheep) protein is Lysozyme C, kidney isozyme.